A 409-amino-acid chain; its full sequence is Gamma-glutamyl phosphate reductase (409 aa).

It belongs to the gamma-glutamyl phosphate reductase family.

Its subcellular location is the cytoplasm. The enzyme catalyses L-glutamate 5-semialdehyde + phosphate + NADP(+) = L-glutamyl 5-phosphate + NADPH + H(+). Its pathway is amino-acid biosynthesis; L-proline biosynthesis; L-glutamate 5-semialdehyde from L-glutamate: step 2/2. Catalyzes the NADPH-dependent reduction of L-glutamate 5-phosphate into L-glutamate 5-semialdehyde and phosphate. The product spontaneously undergoes cyclization to form 1-pyrroline-5-carboxylate. This is Gamma-glutamyl phosphate reductase from Bartonella tribocorum (strain CIP 105476 / IBS 506).